Here is a 361-residue protein sequence, read N- to C-terminus: ETS translocation variant 3-like protein (361 aa).

The segment at residues 39–120 (IQLWHFILEL…KGKRFTYKFN (82 aa)) is a DNA-binding region (ETS). Positions 178-201 (LTGQQTPRGPPETSGDKKGSSSSV) are disordered.

It belongs to the ETS family.

The protein localises to the nucleus. In terms of biological role, transcriptional regulator. This chain is ETS translocation variant 3-like protein (ETV3L), found in Homo sapiens (Human).